Here is a 315-residue protein sequence, read N- to C-terminus: Glycerol-3-phosphate dehydrogenase [NAD(P)+] (315 aa).

Residues W24, R44, R45, and K92 each coordinate NADPH. Residues K92 and G120 each coordinate sn-glycerol 3-phosphate. S124 provides a ligand contact to NADPH. Residues K175, D228, S238, R239, and N240 each coordinate sn-glycerol 3-phosphate. K175 serves as the catalytic Proton acceptor. Residue R239 participates in NADPH binding. E265 provides a ligand contact to NADPH.

It belongs to the NAD-dependent glycerol-3-phosphate dehydrogenase family.

Its subcellular location is the cytoplasm. It catalyses the reaction sn-glycerol 3-phosphate + NAD(+) = dihydroxyacetone phosphate + NADH + H(+). It carries out the reaction sn-glycerol 3-phosphate + NADP(+) = dihydroxyacetone phosphate + NADPH + H(+). The protein operates within membrane lipid metabolism; glycerophospholipid metabolism. Catalyzes the reduction of the glycolytic intermediate dihydroxyacetone phosphate (DHAP) to sn-glycerol 3-phosphate (G3P), the key precursor for phospholipid synthesis. The protein is Glycerol-3-phosphate dehydrogenase [NAD(P)+] of Synechococcus sp. (strain JA-2-3B'a(2-13)) (Cyanobacteria bacterium Yellowstone B-Prime).